Here is a 171-residue protein sequence, read N- to C-terminus: Transcription antitermination protein NusB (171 aa).

The protein belongs to the NusB family.

Functionally, involved in transcription antitermination. Required for transcription of ribosomal RNA (rRNA) genes. Binds specifically to the boxA antiterminator sequence of the ribosomal RNA (rrn) operons. This is Transcription antitermination protein NusB from Pelodictyon phaeoclathratiforme (strain DSM 5477 / BU-1).